The chain runs to 107 residues: Small ribosomal subunit protein bS16m (107 aa).

Belongs to the bacterial ribosomal protein bS16 family. In terms of assembly, component of the mitochondrial small ribosomal subunit (mt-SSU). Mature N.crassa 74S mitochondrial ribosomes consist of a small (37S) and a large (54S) subunit. The 37S small subunit contains a 16S ribosomal RNA (16S mt-rRNA) and 32 different proteins. The 54S large subunit contains a 23S rRNA (23S mt-rRNA) and 42 different proteins.

It is found in the mitochondrion. Functionally, component of the mitochondrial ribosome (mitoribosome), a dedicated translation machinery responsible for the synthesis of mitochondrial genome-encoded proteins, including at least some of the essential transmembrane subunits of the mitochondrial respiratory chain. The mitoribosomes are attached to the mitochondrial inner membrane and translation products are cotranslationally integrated into the membrane. This is Small ribosomal subunit protein bS16m (cyt-21) from Neurospora crassa (strain ATCC 24698 / 74-OR23-1A / CBS 708.71 / DSM 1257 / FGSC 987).